The chain runs to 379 residues: Heme chaperone HemW (379 aa).

The 232-residue stretch at 1–232 folds into the Radical SAM core domain; the sequence is MLQKPNSAYF…MDILAKNGYN (232 aa). S-adenosyl-L-methionine is bound at residue Y9. 3 residues coordinate [4Fe-4S] cluster: C15, C19, and C22. Residues G60, 61-62, E93, Q120, R132, and D157 contribute to the S-adenosyl-L-methionine site; that span reads GT.

It belongs to the anaerobic coproporphyrinogen-III oxidase family. HemW subfamily. As to quaternary structure, homodimer.

It is found in the cytoplasm. The protein resides in the cell membrane. Its function is as follows. Could serve in the delivery of heme to a membrane-localized target protein. Binds one molecule of heme per monomer, possibly covalently; heme and Fe-S cluster binding are independent. Incubation with the reductant sodium dithionite increases binding. Does not have coproporphyrinogen III dehydrogenase activity in vitro, does not complement an E.coli hemN deletion in vivo. Binds 1 Fe-S cluster, it is probably [4Fe-4S]. The cluster is coordinated with 3 cysteines and an exchangeable S-adenosyl-L-methionine; only dimeric protein has the cluster. The sequence is that of Heme chaperone HemW from Lactococcus lactis subsp. lactis (strain IL1403) (Streptococcus lactis).